The primary structure comprises 133 residues: UPF0225 protein BPP1723 (133 aa).

This sequence belongs to the UPF0225 family.

This Bordetella parapertussis (strain 12822 / ATCC BAA-587 / NCTC 13253) protein is UPF0225 protein BPP1723.